A 353-amino-acid chain; its full sequence is S-adenosylmethionine:tRNA ribosyltransferase-isomerase (353 aa).

This sequence belongs to the QueA family. In terms of assembly, monomer.

It is found in the cytoplasm. The catalysed reaction is 7-aminomethyl-7-carbaguanosine(34) in tRNA + S-adenosyl-L-methionine = epoxyqueuosine(34) in tRNA + adenine + L-methionine + 2 H(+). Its pathway is tRNA modification; tRNA-queuosine biosynthesis. In terms of biological role, transfers and isomerizes the ribose moiety from AdoMet to the 7-aminomethyl group of 7-deazaguanine (preQ1-tRNA) to give epoxyqueuosine (oQ-tRNA). The chain is S-adenosylmethionine:tRNA ribosyltransferase-isomerase from Blochmanniella floridana.